The sequence spans 442 residues: ATP-dependent protease ATPase subunit HslU (442 aa).

ATP contacts are provided by residues isoleucine 18, 60–65 (GVGKTE), aspartate 255, glutamate 320, and arginine 392.

Belongs to the ClpX chaperone family. HslU subfamily. In terms of assembly, a double ring-shaped homohexamer of HslV is capped on each side by a ring-shaped HslU homohexamer. The assembly of the HslU/HslV complex is dependent on binding of ATP.

It localises to the cytoplasm. Its function is as follows. ATPase subunit of a proteasome-like degradation complex; this subunit has chaperone activity. The binding of ATP and its subsequent hydrolysis by HslU are essential for unfolding of protein substrates subsequently hydrolyzed by HslV. HslU recognizes the N-terminal part of its protein substrates and unfolds these before they are guided to HslV for hydrolysis. The chain is ATP-dependent protease ATPase subunit HslU from Shewanella putrefaciens (strain CN-32 / ATCC BAA-453).